We begin with the raw amino-acid sequence, 502 residues long: UPF0371 protein CTC_00401 (502 aa).

Belongs to the UPF0371 family.

The polypeptide is UPF0371 protein CTC_00401 (Clostridium tetani (strain Massachusetts / E88)).